A 511-amino-acid polypeptide reads, in one-letter code: ADP,ATP carrier protein 4 (511 aa).

12 helical membrane passes run 34-54 (VSKF…QNLI), 70-90 (IISF…TAIY), 102-122 (IFYL…YVIF), 157-177 (FSLF…LLFW), 192-212 (FYPL…QFLE), 231-251 (FHTL…IIAI), 296-316 (LIAT…GPWK), 330-350 (AAFI…FVVL), 361-381 (FTAA…FFAV), 390-410 (LIIA…IGAI), 453-473 (LGKS…PSAS), and 476-496 (SIST…LWAT).

It belongs to the ADP/ATP translocase tlc family.

It localises to the cell membrane. Provides the rickettsial cell with host ATP in exchange for rickettsial ADP. This is an obligate exchange system. This energy acquiring activity is an important component of rickettsial parasitism. This Rickettsia conorii (strain ATCC VR-613 / Malish 7) protein is ADP,ATP carrier protein 4 (tlcD).